A 170-amino-acid polypeptide reads, in one-letter code: MTAPAKKPSAQEGLFWKTKTLEQMSGPEWESLCDGCARCCLEKLEDEDSGKIYFTHVSCRLLDAGLCGCKDYANRSDQVPDCVRLDPANVRTLNWLPPSCAYKLVAEGRDLYWWHPLISGDPNTVHEAGVSVRGRVQGTELDVNDEHLEQHIVQWPGLLPKRARLKKRPA.

The protein belongs to the UPF0260 family.

The polypeptide is UPF0260 protein RPC_1790 (Rhodopseudomonas palustris (strain BisB18)).